Here is a 269-residue protein sequence, read N- to C-terminus: MANYIVGDIQGCFDELMLLLAQCQFDKNVDTLWVAGDLVARGPKSLETLRFIKSLGDSAKVVLGNHDLHLIAVSLGIRNNKAKDKTAPIFASEDGNELLHWLRQQPLLAEHPKFVVCHAGISPQWDLATARLCAEEVESLLRSENYRWLIENMYCNQPDLWQDNLSGLDRYRYIINAFTRMRFCFADGRLDMDCKLPPSEVKESELMPWFTLPQRRALDKPVLFGHWAALEGYISEEVIGLDTGCVWNGSLTMIRWEDKQVFSQKALEN.

It belongs to the Ap4A hydrolase family.

It catalyses the reaction P(1),P(4)-bis(5'-adenosyl) tetraphosphate + H2O = 2 ADP + 2 H(+). Functionally, hydrolyzes diadenosine 5',5'''-P1,P4-tetraphosphate to yield ADP. The polypeptide is Bis(5'-nucleosyl)-tetraphosphatase, symmetrical (Vibrio vulnificus (strain YJ016)).